The following is a 610-amino-acid chain: DNA mismatch repair protein MutL (610 aa).

Positions 351 to 406 (GQRPQAPWSAETSPSRPYQPAPAFSERPQASFDGLSTPTARAEPQFSPDPVSPGLA) are disordered.

Belongs to the DNA mismatch repair MutL/HexB family.

In terms of biological role, this protein is involved in the repair of mismatches in DNA. It is required for dam-dependent methyl-directed DNA mismatch repair. May act as a 'molecular matchmaker', a protein that promotes the formation of a stable complex between two or more DNA-binding proteins in an ATP-dependent manner without itself being part of a final effector complex. In Rhizobium etli (strain ATCC 51251 / DSM 11541 / JCM 21823 / NBRC 15573 / CFN 42), this protein is DNA mismatch repair protein MutL.